The primary structure comprises 937 residues: Diacylglycerol kinase theta (937 aa).

The tract at residues 1-48 (MATAAESGARTWPGSGSPRLGSPAGSPVLGISGRARPGSGPERTGRAI) is disordered. Phosphoserine occurs at positions 22 and 26. 3 Phorbol-ester/DAG-type zinc fingers span residues 54 to 102 (GHSF…KTPC), 115 to 162 (AHCF…CSDC), and 177 to 228 (HHHW…TPEC). A disordered region spans residues 359-378 (GKAGTTEEETSKDSGPGDSV). Residues 390–489 (TQEILKIYPD…TRFYVAEARA (100 aa)) enclose the Ras-associating domain. Short sequence motifs (LXXLL motif) lie at residues 550 to 554 (LYMLA) and 569 to 573 (LPDVL). In terms of domain architecture, DAGKc spans 579 to 716 (PDCCPLLVFV…MDRWTILLDA (138 aa)). The segment at 911–937 (AKQKPRKAGAIRDTRVDTLPAPEGNPL) is disordered.

Belongs to the eukaryotic diacylglycerol kinase family. In terms of assembly, interacts with RHOA (constitutively activated, GTP-bound); the interaction inhibits DGKQ. Interacts with PRKCE. Interacts with PRKCH. Interacts with PLCB1. Interacts with NR5A1; the interaction requires both LXXLL motifs in DGKQ and is required for full phosphatidic acid-mediated activation of NR5A1. Post-translationally, phosphorylated by PRKCE and PRKCH in vitro. Widely expressed with higher expression in the brain and, to a lesser extent, in the small intestine, duodenum, and liver. In brain, expressed in gray matter. Expression is most intense in the cerebellar cortex and hippocampus, while moderate expression is seen in the olfactory bulb neuronal layers and brain stem nuclei. In the cerebellar cortex, equally expressed in both the Purkinje cell somata and the granule cells.

Its subcellular location is the cytoplasm. It localises to the cytosol. The protein resides in the cell membrane. It is found in the synapse. The protein localises to the cytoskeleton. Its subcellular location is the nucleus. It localises to the nucleus speckle. The protein resides in the nucleus matrix. The catalysed reaction is a 1,2-diacyl-sn-glycerol + ATP = a 1,2-diacyl-sn-glycero-3-phosphate + ADP + H(+). It catalyses the reaction a 1-O-alkyl-sn-glycerol + ATP = a 1-O-alkyl-sn-glycero-3-phosphate + ADP + H(+). It carries out the reaction 1-O-alkyl-2-acyl-sn-glycerol + ATP = 1-O-alkyl-2-acyl-sn-glycero-3-phosphate + ADP + H(+). The enzyme catalyses 1,2-di-(9Z-octadecenoyl)-sn-glycerol + ATP = 1,2-di-(9Z-octadecenoyl)-sn-glycero-3-phosphate + ADP + H(+). The catalysed reaction is 1-O-hexadecyl-sn-glycerol + ATP = 1-O-hexadecyl-sn-glycero-3-phosphate + ADP + H(+). It catalyses the reaction 1-O-hexadecyl-2-acetyl-sn-glycerol + ATP = 1-O-hexadecyl-2-acetyl-sn-glycero-3-phosphate + ADP + H(+). It carries out the reaction 1-octadecanoyl-2-(5Z,8Z,11Z,14Z-eicosatetraenoyl)-sn-glycerol + ATP = 1-octadecanoyl-2-(5Z,8Z,11Z,14Z-eicosatetraenoyl)-sn-glycero-3-phosphate + ADP + H(+). It participates in lipid metabolism; glycerolipid metabolism. With respect to regulation, activated by phosphatidylserine. Diacylglycerol kinase that converts diacylglycerol/DAG into phosphatidic acid/phosphatidate/PA and regulates the respective levels of these two bioactive lipids. Thereby, acts as a central switch between the signaling pathways activated by these second messengers with different cellular targets and opposite effects in numerous biological processes. Within the adrenocorticotropic hormone signaling pathway, produces phosphatidic acid which in turn activates NR5A1 and subsequent steroidogenic gene transcription. Also functions downstream of the nerve growth factor signaling pathway being specifically activated in the nucleus by the growth factor. Through its diacylglycerol activity also regulates synaptic vesicle endocytosis. The sequence is that of Diacylglycerol kinase theta from Rattus norvegicus (Rat).